The sequence spans 349 residues: Dihydroorotase (349 aa).

Residues His17 and His19 each coordinate Zn(2+). Residues 19-21 and Asn45 contribute to the substrate site; that span reads HLR. Positions 103, 140, and 178 each coordinate Zn(2+). Lys103 is subject to N6-carboxylysine. His140 provides a ligand contact to substrate. Residue Leu224 participates in substrate binding. A Zn(2+)-binding site is contributed by Asp252. Asp252 is an active-site residue. Substrate contacts are provided by His256 and Ala268.

The protein belongs to the metallo-dependent hydrolases superfamily. DHOase family. Class II DHOase subfamily. Homodimer. It depends on Zn(2+) as a cofactor.

It catalyses the reaction (S)-dihydroorotate + H2O = N-carbamoyl-L-aspartate + H(+). Its pathway is pyrimidine metabolism; UMP biosynthesis via de novo pathway; (S)-dihydroorotate from bicarbonate: step 3/3. Its function is as follows. Catalyzes the reversible cyclization of carbamoyl aspartate to dihydroorotate. This chain is Dihydroorotase, found in Buchnera aphidicola subsp. Schizaphis graminum (strain Sg).